The sequence spans 291 residues: Glutamate racemase (291 aa).

Residues 12–13 (DS) and 44–45 (YG) contribute to the substrate site. Residue Cys-75 is the Proton donor/acceptor of the active site. 76-77 (NT) contacts substrate. Residue Cys-187 is the Proton donor/acceptor of the active site. Residue 188-189 (TH) participates in substrate binding. Residues 234–247 (ATQAAGARAQMAPS) show a composition bias toward low complexity. The tract at residues 234 to 257 (ATQAAGARAQMAPSAPEPKEGTPD) is disordered.

This sequence belongs to the aspartate/glutamate racemases family.

The catalysed reaction is L-glutamate = D-glutamate. It participates in cell wall biogenesis; peptidoglycan biosynthesis. Its function is as follows. Provides the (R)-glutamate required for cell wall biosynthesis. This Koribacter versatilis (strain Ellin345) protein is Glutamate racemase.